A 205-amino-acid polypeptide reads, in one-letter code: Troponin I, cardiac muscle (205 aa).

The tract at residues 1–38 is disordered; the sequence is MADQSGNAAPPPVRRRSSANYRAYATEPHAKKKSKISA. At alanine 2 the chain carries N-acetylalanine. Position 5 is a phosphoserine (serine 5). Phosphoserine; by PKA and PKD/PRKD1 occurs at positions 17 and 18. Tyrosine 21 carries the post-translational modification Phosphotyrosine. Position 26 is a phosphothreonine; by STK4/MST1 (threonine 26). Positions 27–74 are involved in binding TNC; sequence EPHAKKKSKISASRKLQLKTLMLQIAKQELEREAVERRGEKGRALSTR. Phosphoserine; by PKC/PRKCE occurs at positions 37 and 39. Threonine 46 is modified (phosphothreonine; by STK4/MST1). Serine 72 carries the post-translational modification Phosphoserine. Residue threonine 73 is modified to Phosphothreonine. Residues 124–145 are involved in binding TNC and actin; it reads NQKIFDLRGKFKRPTLRRVRIS. At threonine 138 the chain carries Phosphothreonine; by STK4/MST1. Serine 145 carries the phosphoserine; by PAK3 modification. Phosphothreonine is present on threonine 176. Serine 194 is subject to Phosphoserine.

The protein belongs to the troponin I family. In terms of assembly, binds to actin and tropomyosin. Interacts with TRIM63. Interacts with STK4/MST1. Post-translationally, phosphorylated at Ser-17 and Ser-18 by PRKD1; phosphorylation reduces myofilament calcium sensitivity. Phosphorylated preferentially at Thr-26. Phosphorylation by STK4/MST1 alters its binding affinity to TNNC1 (cardiac Tn-C) and TNNT2 (cardiac Tn-T). Phosphorylated at Ser-37 and Ser-39 by PRKCE; phosphorylation increases myocardium contractile dysfunction.

Functionally, troponin I is the inhibitory subunit of troponin, the thin filament regulatory complex which confers calcium-sensitivity to striated muscle actomyosin ATPase activity. The polypeptide is Troponin I, cardiac muscle (TNNI3) (Equus caballus (Horse)).